A 322-amino-acid chain; its full sequence is Pre-mRNA-splicing factor NTR2 (322 aa).

The interval 1-30 (MAIKKRNKIRLPSGSPEEVGIDGSAHKPMQ) is disordered. Ser-40 carries the phosphoserine modification. Residues 113 to 137 (LLSDSSEAGSSSEGEHISSIPTRGE) are disordered. Low complexity predominate over residues 115-132 (SDSSEAGSSSEGEHISSI). Phosphoserine is present on residues Ser-153 and Ser-197.

As to quaternary structure, component of the NTR complex (NTC-related complex), composed of NTR1, NTR2 and PRP43. Interacts with CLF1, NTR1 and PRP43.

The protein resides in the cytoplasm. Its subcellular location is the nucleus. In terms of biological role, involved in pre-mRNA splicing and spliceosome disassembly. Promotes release of excised lariat intron from the spliceosome by acting as a receptor for PRP43. This targeting of PRP43 leads to disassembly of the spliceosome with the separation of the U2, U5, U6 snRNPs and the NTC complex. The sequence is that of Pre-mRNA-splicing factor NTR2 (NTR2) from Saccharomyces cerevisiae (strain ATCC 204508 / S288c) (Baker's yeast).